The primary structure comprises 243 residues: MTIYPAIDIKGGRCVRLTQGRAEQETIYAQNPADVAMQFRAAGSEWVHVVDLDGAFAGEPQNLAAVQAIVAVGMKVQFGGGLRTRAAVERALALGVSRVVLGTRAAESESFVGELVQAFGDKIAVGIDAKNGKVAVKGWVATADLSTLVLARRMDTLGVATLIHTDIGTDGMLTGPNLAAQEALCSAVKSRVIASGGVSRRDDVVNLAKLAQRHANLDGVIVGKALYERRVELADLLSLAAAS.

Asp-8 acts as the Proton acceptor in catalysis. The active-site Proton donor is Asp-128.

The protein belongs to the HisA/HisF family.

Its subcellular location is the cytoplasm. It catalyses the reaction 1-(5-phospho-beta-D-ribosyl)-5-[(5-phospho-beta-D-ribosylamino)methylideneamino]imidazole-4-carboxamide = 5-[(5-phospho-1-deoxy-D-ribulos-1-ylimino)methylamino]-1-(5-phospho-beta-D-ribosyl)imidazole-4-carboxamide. It functions in the pathway amino-acid biosynthesis; L-histidine biosynthesis; L-histidine from 5-phospho-alpha-D-ribose 1-diphosphate: step 4/9. This Opitutus terrae (strain DSM 11246 / JCM 15787 / PB90-1) protein is 1-(5-phosphoribosyl)-5-[(5-phosphoribosylamino)methylideneamino] imidazole-4-carboxamide isomerase.